The chain runs to 465 residues: Cysteine--tRNA ligase (465 aa).

Cys29 contacts Zn(2+). The short motif at 31–41 is the 'HIGH' region element; it reads PTVYNYIHIGN. The Zn(2+) site is built by Cys209, His234, and Glu238. The 'KMSKS' region motif lies at 266 to 270; it reads KMSKS. Lys269 is a binding site for ATP. Ser270 is subject to Phosphoserine.

This sequence belongs to the class-I aminoacyl-tRNA synthetase family. In terms of assembly, monomer. Zn(2+) is required as a cofactor.

The protein resides in the cytoplasm. It catalyses the reaction tRNA(Cys) + L-cysteine + ATP = L-cysteinyl-tRNA(Cys) + AMP + diphosphate. This is Cysteine--tRNA ligase from Bacillus cereus (strain 03BB102).